The following is a 677-amino-acid chain: UvrABC system protein B (677 aa).

The region spanning 27 to 192 (ANLGQGVRDQ…QRNDFDFHRG (166 aa)) is the Helicase ATP-binding domain. Position 40 to 47 (40 to 47 (GVTGSGKT)) interacts with ATP. The short motif at 93-116 (YYDYYQPEAYVPASDTYIEKDSSI) is the Beta-hairpin element. The region spanning 432–594 (QVDDLLAECR…IEPRTIRKSL (163 aa)) is the Helicase C-terminal domain. Positions 638-673 (AKHIQKLEREMREAAKELEFERAATLRDRIRLLRER) constitute a UVR domain.

Belongs to the UvrB family. Forms a heterotetramer with UvrA during the search for lesions. Interacts with UvrC in an incision complex.

Its subcellular location is the cytoplasm. Its function is as follows. The UvrABC repair system catalyzes the recognition and processing of DNA lesions. A damage recognition complex composed of 2 UvrA and 2 UvrB subunits scans DNA for abnormalities. Upon binding of the UvrA(2)B(2) complex to a putative damaged site, the DNA wraps around one UvrB monomer. DNA wrap is dependent on ATP binding by UvrB and probably causes local melting of the DNA helix, facilitating insertion of UvrB beta-hairpin between the DNA strands. Then UvrB probes one DNA strand for the presence of a lesion. If a lesion is found the UvrA subunits dissociate and the UvrB-DNA preincision complex is formed. This complex is subsequently bound by UvrC and the second UvrB is released. If no lesion is found, the DNA wraps around the other UvrB subunit that will check the other stand for damage. This is UvrABC system protein B from Nitratidesulfovibrio vulgaris (strain DP4) (Desulfovibrio vulgaris).